The primary structure comprises 525 residues: Protein shisa-6 (525 aa).

The signal sequence occupies residues 1–30; it reads MALRRLLLPPLLLSLLLSLASLHLPPGADA. Over 31–180 the chain is Extracellular; that stretch reads ARGRSGNRTL…NKYDPEKDKT (150 aa). N-linked (GlcNAc...) asparagine glycans are attached at residues Asn-37 and Asn-62. The helical transmembrane segment at 181–201 threads the bilayer; it reads NFTVYITCGVIAFVIVAGVFA. Residues 202–525 lie on the Cytoplasmic side of the membrane; sequence KVSYDKAHRP…YTASKTEVTV (324 aa). The segment at 241 to 294 is disordered; that stretch reads ISAIDTSPKENTPVRSTSKNHYTPVRTAKQTPGDRQYNHPILSSATQTPTHEKP. Over residues 243–261 the composition is skewed to polar residues; sequence AIDTSPKENTPVRSTSKNH. Phosphoserine occurs at positions 416, 422, and 434. A Phosphothreonine modification is found at Thr-458. The tract at residues 469 to 495 is disordered; the sequence is MHSHPSASNNSYATLGQSQTAAKRHAF. A compositionally biased stretch (polar residues) spans 473 to 489; that stretch reads PSASNNSYATLGQSQTA. Thr-502 carries the phosphothreonine modification. Positions 522 to 525 match the PDZ-binding motif; it reads EVTV.

The protein belongs to the shisa family. As to quaternary structure, component of the postsynaptic hippocampal AMPA-type glutamate receptor (AMPAR) complex, at least composed of pore forming AMPAR subunits GRIA1, GRIA2 and GRIA3 and AMPAR auxiliary proteins SHISA6 and SHISA7. Interacts (via PDZ-binding motif) with DLG4/PSD-95 (via PDZ domain); the interaction is direct. N-glycosylated. Highly expressed in cerebellum and hippocampal neurons: CA1 stratum oriens and stratum radiatum, CA3 stratum oriens and stratum lucidum, and the dentate gyrus polymorphic layer. Expressed in other brain structures including olfactory bulb, cortex, amygdala and midbrain (at protein level). Also expressed in a subset of spermatogonial stem cells. Also expressed in eye, heart, kidney, lung, muscle and spleen. Isoform 2: Specifically expressed in hippocampus.

The protein localises to the postsynaptic density membrane. In terms of biological role, involved in maintenance of high-frequency synaptic transmission at hippocampal CA3-CA1 synapses. Regulates AMPA-type glutamate receptor (AMPAR) immobilization at postsynaptic density keeping the channels in an activated state in the presence of glutamate and preventing synaptic depression. May play a role in self-renewal and differentiation of spermatogonial stem cells by inhibiting canonical Wnt signaling pathway. The protein is Protein shisa-6 of Mus musculus (Mouse).